A 207-amino-acid chain; its full sequence is Alpha/beta-tubulin-N-acetyltransferase 9 (207 aa).

The region spanning 35–180 (EELQRLTASE…QEVTLRLTVS (146 aa)) is the N-acetyltransferase domain.

This sequence belongs to the acetyltransferase family. GNAT subfamily.

The catalysed reaction is N-terminal L-methionyl-[tubulin] + acetyl-CoA = N-terminal N(alpha)-acetyl-L-methionyl-[tubulin] + CoA + H(+). In terms of biological role, N-acetyltransferase that mediates the acetylation of the N-terminal residues of alpha- and beta-tubulin. The chain is Alpha/beta-tubulin-N-acetyltransferase 9 (NAT9) from Homo sapiens (Human).